The primary structure comprises 117 residues: LIM and senescent cell antigen-like-containing domain protein 3 (117 aa).

The region spanning 70–117 (ATCERCKGGFAPAETIVNSNGELYHEQCFVCAQCFQQFPEGLFYEERT) is the LIM zinc-binding domain.

In terms of tissue distribution, detected in testis.

It localises to the cytoplasm. The chain is LIM and senescent cell antigen-like-containing domain protein 3 (LIMS3) from Homo sapiens (Human).